The following is a 328-amino-acid chain: MALTADVKDEIARVSVVRAEDMNAEVAALLRYSGALHLVAGQIVVESEVDSSATARRLMEFVEQLYHHEAQLQIIGAGNLRKSARYIVKWIKGGTEIARRTGLIDRAGRPVQGLPRTIIGGPKSACVAAWRGAFLARGTLTEPGRSCALEVATPSNEAALALVGAGRRIGVTAKTRETRGVHRVVVKDAESISALLTLMGAQATRLVWEERRMRREVRATANRLANFDDANLRRSARAAVAAAARADRALEILGEDVPTHLAEAGQLRVKHRQASLEELGQLASPPMTKDAVAGRIRRLLSMADKRAEELDIPDTHAAVTEDLFQDVE.

A DNA-binding region (H-T-H motif) is located at residues 275-308 (SLEELGQLASPPMTKDAVAGRIRRLLSMADKRAE).

The protein belongs to the WhiA family.

Involved in cell division and chromosome segregation. The protein is Probable cell division protein WhiA of Corynebacterium urealyticum (strain ATCC 43042 / DSM 7109).